The primary structure comprises 537 residues: Phosphoenolpyruvate carboxykinase (ATP) (537 aa).

Residues arginine 61, tyrosine 194, and lysine 200 each coordinate substrate. Residues lysine 200, histidine 219, and 235–243 (GLSGTGKTT) each bind ATP. Mn(2+)-binding residues include lysine 200 and histidine 219. A Mn(2+)-binding site is contributed by aspartate 256. ATP is bound by residues glutamate 284, arginine 322, and threonine 448. Arginine 322 contributes to the substrate binding site.

The protein belongs to the phosphoenolpyruvate carboxykinase (ATP) family. Requires Mn(2+) as cofactor.

It is found in the cytoplasm. It carries out the reaction oxaloacetate + ATP = phosphoenolpyruvate + ADP + CO2. The protein operates within carbohydrate biosynthesis; gluconeogenesis. In terms of biological role, involved in the gluconeogenesis. Catalyzes the conversion of oxaloacetate (OAA) to phosphoenolpyruvate (PEP) through direct phosphoryl transfer between the nucleoside triphosphate and OAA. The chain is Phosphoenolpyruvate carboxykinase (ATP) from Bradyrhizobium sp. (strain ORS 278).